The primary structure comprises 134 residues: Small ribosomal subunit protein uS11 (134 aa).

A disordered region spans residues Asp114–Leu134. Positions Arg125 to Leu134 are enriched in basic residues.

It belongs to the universal ribosomal protein uS11 family.

This Candida albicans (Yeast) protein is Small ribosomal subunit protein uS11 (RPS14).